The chain runs to 224 residues: Non-structural protein V (224 aa).

Polar residues predominate over residues 54-65 (QKNIQHPTASHQ). Disordered regions lie at residues 54–96 (QKNI…DPEP) and 150–171 (TEFK…GGHR). Zn(2+)-binding residues include H170, C189, C193, C205, C207, C210, C214, and C217.

Belongs to the paramyxoviruses V protein family. In terms of assembly, interacts with host IFIH1/MDA5 and DHX58/LGP2. Forms with host DDB1, CUL4A, STAT1, STAT2 and STAT3 the mumps virus V-dependent complex (VDC).

Its subcellular location is the virion. It is found in the host cytoplasm. Functionally, plays an essential role in the inhibition of host immune response. Prevents the establishment of cellular antiviral state by blocking interferon-alpha/beta (IFN-alpha/beta) production and signaling pathway. Interacts with host IFIH1/MDA5 and DHX58/LGP2 to inhibit the transduction pathway involved in the activation of IFN-beta promoter, thus protecting the virus against cell antiviral state. Blocks the type I and II interferon signaling pathways by interacting with host STAT1, STAT2 and STAT3, and mediating their ubiquitination and subsequent proteasomal degradation. In Mumps virus (strain SBL) (MuV), this protein is Non-structural protein V.